Reading from the N-terminus, the 340-residue chain is Ephrin-B3 (340 aa).

A signal peptide spans 1 to 27 (MGAPHFGPGGVQVGALLLLGFAGLVSG). One can recognise an Ephrin RBD domain in the interval 28 to 167 (LSLEPVYWNS…TRGMKVLLRV (140 aa)). Residues 28-227 (LSLEPVYWNS…GPLPPPSMPA (200 aa)) lie on the Extracellular side of the membrane. 2 cysteine pairs are disulfide-bonded: Cys-62–Cys-104 and Cys-92–Cys-156. A disordered region spans residues 168 to 227 (GQSPRGGAVPRKPVSEMPMERDRGAAHSAEPGRDTIPGDPSSNATSRGAEGPLPPPSMPA). Basic and acidic residues predominate over residues 185–200 (PMERDRGAAHSAEPGR). The N-linked (GlcNAc...) asparagine glycan is linked to Asn-210. Residues 228–248 (VAGAAGGMALLLLGVAGAGGA) traverse the membrane as a helical segment. Over 249 to 340 (MCWRRRRAKP…QSPPNIYYKV (92 aa)) the chain is Cytoplasmic. Residues 254–300 (RRAKPSESRHPGPGSFGRGGSLGLGGGGGMGPREAEPGELGIALRGG) form a disordered region. Over residues 267-284 (GSFGRGGSLGLGGGGGMG) the composition is skewed to gly residues. Omega-N-methylarginine is present on Arg-271. Residue Ser-274 is modified to Phosphoserine. The PDZ-binding signature appears at 338 to 340 (YKV).

Belongs to the ephrin family. In terms of assembly, interacts with GRIP1 and GRIP2. Expressed on lateral floor plate cells, specifically on commissural axon segments that have passed through the floor plate. Expressed in cells of the retinal ganglion cell layer during retinal axon guidance to the optic disk. Expressed in myogenic progenitor cells.

It localises to the membrane. Its function is as follows. Cell surface transmembrane ligand for Eph receptors, a family of receptor tyrosine kinases which are crucial for migration, repulsion and adhesion during neuronal, vascular and epithelial development. Binds promiscuously Eph receptors residing on adjacent cells, leading to contact-dependent bidirectional signaling into neighboring cells. The signaling pathway downstream of the receptor is referred to as forward signaling while the signaling pathway downstream of the ephrin ligand is referred to as reverse signaling. May play a pivotal role in forebrain function. Binds to, and induce the collapse of, commissural axons/growth cones in vitro. May play a role in constraining the orientation of longitudinally projecting axons. This is Ephrin-B3 (Efnb3) from Mus musculus (Mouse).